The primary structure comprises 288 residues: Protoheme IX farnesyltransferase (288 aa).

9 helical membrane-spanning segments follow: residues 16–36 (VWSL…PYFN), 37–57 (LHYI…SMGA), 88–108 (INGL…LAAF), 111–131 (LYAA…YSYL), 138–158 (WNII…WYTV), 162–182 (FSIL…IHVW), 210–230 (AICI…PAFF), 236–256 (VYMI…IVFV), and 265–285 (LKLF…VLIF).

This sequence belongs to the UbiA prenyltransferase family. Protoheme IX farnesyltransferase subfamily.

Its subcellular location is the cell membrane. It carries out the reaction heme b + (2E,6E)-farnesyl diphosphate + H2O = Fe(II)-heme o + diphosphate. Its pathway is porphyrin-containing compound metabolism; heme O biosynthesis; heme O from protoheme: step 1/1. Its function is as follows. Converts heme B (protoheme IX) to heme O by substitution of the vinyl group on carbon 2 of heme B porphyrin ring with a hydroxyethyl farnesyl side group. In Thermoplasma acidophilum (strain ATCC 25905 / DSM 1728 / JCM 9062 / NBRC 15155 / AMRC-C165), this protein is Protoheme IX farnesyltransferase.